Consider the following 257-residue polypeptide: Protein LigF (257 aa).

Residues Met1–Gly82 form the GST N-terminal domain. The region spanning Asp89–Ala257 is the GST C-terminal domain.

The protein belongs to the GST superfamily.

Lignin degradation enzyme. The polypeptide is Protein LigF (ligF) (Sphingobium sp. (strain NBRC 103272 / SYK-6)).